Consider the following 178-residue polypeptide: Peptidyl-prolyl cis-trans isomerase H (178 aa).

The PPIase cyclophilin-type domain maps to Phe14–Gln177.

This sequence belongs to the cyclophilin-type PPIase family. PPIase H subfamily.

The protein localises to the nucleus. It catalyses the reaction [protein]-peptidylproline (omega=180) = [protein]-peptidylproline (omega=0). Its function is as follows. PPIases accelerate the folding of proteins. It catalyzes the cis-trans isomerization of proline imidic peptide bonds in oligopeptides. This is Peptidyl-prolyl cis-trans isomerase H (cyp7) from Rhizopus delemar (strain RA 99-880 / ATCC MYA-4621 / FGSC 9543 / NRRL 43880) (Mucormycosis agent).